The following is a 261-amino-acid chain: Thiazole synthase (261 aa).

Residue K98 is the Schiff-base intermediate with DXP of the active site. 1-deoxy-D-xylulose 5-phosphate is bound by residues G159, 185-186, and 207-208; these read AG and AS.

The protein belongs to the ThiG family. As to quaternary structure, homotetramer. Forms heterodimers with either ThiH or ThiS.

The protein resides in the cytoplasm. It catalyses the reaction [ThiS sulfur-carrier protein]-C-terminal-Gly-aminoethanethioate + 2-iminoacetate + 1-deoxy-D-xylulose 5-phosphate = [ThiS sulfur-carrier protein]-C-terminal Gly-Gly + 2-[(2R,5Z)-2-carboxy-4-methylthiazol-5(2H)-ylidene]ethyl phosphate + 2 H2O + H(+). It participates in cofactor biosynthesis; thiamine diphosphate biosynthesis. Functionally, catalyzes the rearrangement of 1-deoxy-D-xylulose 5-phosphate (DXP) to produce the thiazole phosphate moiety of thiamine. Sulfur is provided by the thiocarboxylate moiety of the carrier protein ThiS. In vitro, sulfur can be provided by H(2)S. This chain is Thiazole synthase, found in Mycobacterium leprae (strain Br4923).